A 165-amino-acid chain; its full sequence is Transcription factor E (165 aa).

In terms of domain architecture, HTH TFE/IIEalpha-type spans N5 to E87.

Belongs to the TFE family. Monomer. Interaction with RNA polymerase subunits RpoF and RpoE is necessary for Tfe stimulatory transcription activity. Able to interact with Tbp and RNA polymerase in the absence of DNA promoter. Interacts both with the preinitiation and elongation complexes.

Its function is as follows. Transcription factor that plays a role in the activation of archaeal genes transcribed by RNA polymerase. Facilitates transcription initiation by enhancing TATA-box recognition by TATA-box-binding protein (Tbp), and transcription factor B (Tfb) and RNA polymerase recruitment. Not absolutely required for transcription in vitro, but particularly important in cases where Tbp or Tfb function is not optimal. It dynamically alters the nucleic acid-binding properties of RNA polymerases by stabilizing the initiation complex and destabilizing elongation complexes. Seems to translocate with the RNA polymerase following initiation and acts by binding to the non template strand of the transcription bubble in elongation complexes. The polypeptide is Transcription factor E (Methanococcoides burtonii (strain DSM 6242 / NBRC 107633 / OCM 468 / ACE-M)).